Here is a 67-residue protein sequence, read N- to C-terminus: Prokaryotic ubiquitin-like protein Pup (67 aa).

The segment at 1-36 is disordered; it reads MPQQFEQPQAQQAATQEDDALATTQAAAQTESADQA. Residues 23 to 61 are ARC ATPase binding; it reads TTQAAAQTESADQADVLDDILDDIESTLETNAEEYVNSF. An Isoglutamyl lysine isopeptide (Glu-Lys) (interchain with K-? in acceptor proteins) cross-link involves residue glutamate 67.

The protein belongs to the prokaryotic ubiquitin-like protein family. As to quaternary structure, strongly interacts with the proteasome-associated ATPase ARC through a hydrophobic interface; the interacting region of Pup lies in its C-terminal half. There is one Pup binding site per ARC hexamer ring.

It participates in protein degradation; proteasomal Pup-dependent pathway. Its function is as follows. Protein modifier that is covalently attached to lysine residues of substrate proteins, thereby targeting them for proteasomal degradation. The tagging system is termed pupylation. The protein is Prokaryotic ubiquitin-like protein Pup of Bifidobacterium longum (strain DJO10A).